We begin with the raw amino-acid sequence, 344 residues long: MMVIRPVERSDVSELMQLASKTGGGLTSLPANEATLSVRIERAIKTWQGELPKSEQGYVFVLEDSETGTVAGICAIEVAVGLNDPWYNYRVGTLVHASKELNVYNALPTLFLSNDHTGSSELCTLFLDPEWRKEGNGYLLSKSRFMFMAAFRDKFNDKVVAEMRGVIDEHGYSPFWQSLGKRFFSMDFSRADFLCGTGQKAFIAELMPKHPIYTHFLSQEAQDVIGQVHPQTAPARAVLEKEGFRYRNYIDIFDGGPTLECDIDRVRAIRKSRLVEVAEGQPAQGDFPACLVANENYHHFRVVLVRTDPATERLILTAAQLDALKCHAGDRVRLVRLCAEEKTA.

L125 is a binding site for succinyl-CoA. H229 (proton donor) is an active-site residue.

This sequence belongs to the arginine N-succinyltransferase family.

The enzyme catalyses succinyl-CoA + L-arginine = N(2)-succinyl-L-arginine + CoA + H(+). It participates in amino-acid degradation; L-arginine degradation via AST pathway; L-glutamate and succinate from L-arginine: step 1/5. Its function is as follows. Catalyzes the transfer of succinyl-CoA to arginine to produce N(2)-succinylarginine. In Escherichia coli O6:K15:H31 (strain 536 / UPEC), this protein is Arginine N-succinyltransferase.